The sequence spans 148 residues: Ribonuclease H (148 aa).

An RNase H type-1 domain is found at 2-143 (TADIIYIYSD…ADVLANQGVL (142 aa)). Positions 11, 49, 71, and 135 each coordinate Mg(2+).

It belongs to the RNase H family. In terms of assembly, monomer. It depends on Mg(2+) as a cofactor.

It is found in the cytoplasm. It catalyses the reaction Endonucleolytic cleavage to 5'-phosphomonoester.. Endonuclease that specifically degrades the RNA of RNA-DNA hybrids. The polypeptide is Ribonuclease H (Thiobacillus denitrificans (strain ATCC 25259 / T1)).